Here is a 376-residue protein sequence, read N- to C-terminus: UPF0284 protein glr4139 (376 aa).

This sequence belongs to the UPF0284 family.

This is UPF0284 protein glr4139 from Gloeobacter violaceus (strain ATCC 29082 / PCC 7421).